The sequence spans 428 residues: 3-phosphoshikimate 1-carboxyvinyltransferase (428 aa).

Lys-21, Ser-22, and Arg-26 together coordinate 3-phosphoshikimate. Position 21 (Lys-21) interacts with phosphoenolpyruvate. The phosphoenolpyruvate site is built by Gly-94 and Arg-122. Residues Ser-166, Ser-167, Gln-168, Ser-194, Asp-306, and Lys-333 each coordinate 3-phosphoshikimate. Residue Gln-168 participates in phosphoenolpyruvate binding. Asp-306 acts as the Proton acceptor in catalysis. 3 residues coordinate phosphoenolpyruvate: Arg-337, Arg-379, and Lys-405.

Belongs to the EPSP synthase family. In terms of assembly, monomer.

It is found in the cytoplasm. It carries out the reaction 3-phosphoshikimate + phosphoenolpyruvate = 5-O-(1-carboxyvinyl)-3-phosphoshikimate + phosphate. Its pathway is metabolic intermediate biosynthesis; chorismate biosynthesis; chorismate from D-erythrose 4-phosphate and phosphoenolpyruvate: step 6/7. In terms of biological role, catalyzes the transfer of the enolpyruvyl moiety of phosphoenolpyruvate (PEP) to the 5-hydroxyl of shikimate-3-phosphate (S3P) to produce enolpyruvyl shikimate-3-phosphate and inorganic phosphate. The chain is 3-phosphoshikimate 1-carboxyvinyltransferase from Clostridium acetobutylicum (strain ATCC 824 / DSM 792 / JCM 1419 / IAM 19013 / LMG 5710 / NBRC 13948 / NRRL B-527 / VKM B-1787 / 2291 / W).